Consider the following 386-residue polypeptide: MLAVHFGAGNIGRGFIGQLLQKAGYEIAFVDVNAALVDELNERKMYRVQLATTGKPESVVEGVRAINGQDVAAVAEAIATADLVTTAVGPNILPHIAGAIAAGITQRLTVHARPLNVIACENMIGGSEKLKEHVYEHLTESVQAQAAQWIGFPNAAVDRIVPLQQHADKLLVMVEPFFEWVVDSSQIVGEVPAIEGVTYVEDLAPYIERKLFTVNTGHAVIAYLGYQLGMKTIDEAMRDDRIVQATRGALQETGALLAAKYGFDPQVHGQYVEKILGRYTNPLLSDDIVRVARSPIRKLSQHDRLVGPALQCMEKGMNASYLGLAIAAALAFDYPEDAESARIQASLKEFGWENTLHNCTGIPAGHPLEEIVREQARRLKEWSGSH.

Residue 3–14 (AVHFGAGNIGRG) coordinates NAD(+).

The protein belongs to the mannitol dehydrogenase family.

The catalysed reaction is D-mannitol 1-phosphate + NAD(+) = beta-D-fructose 6-phosphate + NADH + H(+). The chain is Mannitol-1-phosphate 5-dehydrogenase from Brevibacillus brevis (strain 47 / JCM 6285 / NBRC 100599).